Here is a 472-residue protein sequence, read N- to C-terminus: Protein PIN-LIKES 1 (472 aa).

Topologically, residues 1–93 are lumenal; that stretch reads MSLTQSAKLH…FYSMRMRLLD (93 aa). A helical transmembrane segment spans residues 94 to 114; that stretch reads LFITSSIPVAKILLITGIGFY. Topologically, residues 115–133 are cytoplasmic; sequence LALDQVNILNHDARKQLNN. The chain crosses the membrane as a helical span at residues 134 to 154; that stretch reads IVFYVFSPSLVASSLSETITY. The Lumenal portion of the chain corresponds to 155-161; the sequence is ESMVKMW. Residues 162–182 form a helical membrane-spanning segment; it reads FMPLNVLLTFIIGSFLGWIVI. At 183-193 the chain is on the cytoplasmic side; it reads KITKPPSHLRG. A helical membrane pass occupies residues 194 to 214; it reads IIVGCCAAGNLGNMPLIIIPA. Over 215-231 the chain is Lumenal; that stretch reads ICNEKGSPFGDPESCEK. Residues 232 to 252 form a helical membrane-spanning segment; that stretch reads FGLGYIALSMAIGAIYIWTYV. Over 253 to 309 the chain is Cytoplasmic; it reads YNLMRMLANPAGETAINSTSSTMPLISPKVEVAEQVGTWGKVKQRVCSVAEKINLRT. A helical transmembrane segment spans residues 310 to 330; sequence IFAPSTIAALIALAVGLNPLL. Over 331–347 the chain is Lumenal; the sequence is RKLLVGNTAPLRVIEDS. A helical membrane pass occupies residues 348–368; sequence VSLLGDGAIPVLTLIVGGNLL. Over 369–379 the chain is Cytoplasmic; the sequence is NGLRGSGINKS. Residues 380-400 form a helical membrane-spanning segment; it reads VIMGVVVVRYLLLPILGVFIV. Residues 401–413 lie on the Lumenal side of the membrane; it reads RGAHYLGLVTSEP. Residues 414 to 434 form a helical membrane-spanning segment; sequence LYQFVLLLQYVVPPAMNLGTI. Over 435–446 the chain is Cytoplasmic; sequence TQLFGSGESECS. The chain crosses the membrane as a helical span at residues 447–467; sequence VILFWSYALASVSLTVWPTFF. Residues 468–472 lie on the Lumenal side of the membrane; the sequence is MWLVA.

The protein belongs to the auxin efflux carrier (TC 2.A.69.2) family. In terms of tissue distribution, expressed in flowers.

The protein resides in the endoplasmic reticulum membrane. Its function is as follows. Involved in cellular auxin homeostasis by regulating auxin metabolism. Regulates intracellular auxin accumulation at the endoplasmic reticulum and thus auxin availability for nuclear auxin signaling. The sequence is that of Protein PIN-LIKES 1 from Arabidopsis thaliana (Mouse-ear cress).